Reading from the N-terminus, the 342-residue chain is Glycerol-1-phosphate dehydrogenase [NAD(P)+] (342 aa).

NAD(+)-binding positions include 84-88 (GRPID) and 106-109 (TSAS). Residue Asp111 participates in substrate binding. Ser115 provides a ligand contact to NAD(+). Asp160 contacts substrate. Zn(2+) is bound by residues Asp160 and His241. Substrate is bound at residue His245. Position 260 (His260) interacts with Zn(2+).

This sequence belongs to the glycerol-1-phosphate dehydrogenase family. As to quaternary structure, homodimer. It depends on Zn(2+) as a cofactor.

It localises to the cytoplasm. It catalyses the reaction sn-glycerol 1-phosphate + NAD(+) = dihydroxyacetone phosphate + NADH + H(+). The enzyme catalyses sn-glycerol 1-phosphate + NADP(+) = dihydroxyacetone phosphate + NADPH + H(+). The protein operates within membrane lipid metabolism; glycerophospholipid metabolism. In terms of biological role, catalyzes the NAD(P)H-dependent reduction of dihydroxyacetonephosphate (DHAP or glycerone phosphate) to glycerol 1-phosphate (G1P). The G1P thus generated is used as the glycerophosphate backbone of phospholipids in the cellular membranes of Archaea. In Pyrobaculum arsenaticum (strain DSM 13514 / JCM 11321 / PZ6), this protein is Glycerol-1-phosphate dehydrogenase [NAD(P)+].